The following is a 212-amino-acid chain: Ribosomal RNA small subunit methyltransferase G (212 aa).

S-adenosyl-L-methionine-binding positions include Gly72, Leu77, 123–124 (VE), and Arg138.

It belongs to the methyltransferase superfamily. RNA methyltransferase RsmG family.

The protein localises to the cytoplasm. It catalyses the reaction guanosine(527) in 16S rRNA + S-adenosyl-L-methionine = N(7)-methylguanosine(527) in 16S rRNA + S-adenosyl-L-homocysteine. Its function is as follows. Specifically methylates the N7 position of guanine in position 527 of 16S rRNA. The sequence is that of Ribosomal RNA small subunit methyltransferase G from Histophilus somni (strain 2336) (Haemophilus somnus).